Here is a 371-residue protein sequence, read N- to C-terminus: tRNA-specific 2-thiouridylase MnmA (371 aa).

ATP-binding positions include 13 to 20 and Met39; that span reads GMSGGVDS. The interaction with target base in tRNA stretch occupies residues 99–101; the sequence is NPD. Cys104 functions as the Nucleophile in the catalytic mechanism. A disulfide bridge links Cys104 with Cys200. Gly128 serves as a coordination point for ATP. Residues 150 to 152 form an interaction with tRNA region; it reads KDQ. Catalysis depends on Cys200, which acts as the Cysteine persulfide intermediate. Positions 308-309 are interaction with tRNA; the sequence is RY.

The protein belongs to the MnmA/TRMU family.

It localises to the cytoplasm. It catalyses the reaction S-sulfanyl-L-cysteinyl-[protein] + uridine(34) in tRNA + AH2 + ATP = 2-thiouridine(34) in tRNA + L-cysteinyl-[protein] + A + AMP + diphosphate + H(+). Functionally, catalyzes the 2-thiolation of uridine at the wobble position (U34) of tRNA, leading to the formation of s(2)U34. This Bacillus thuringiensis (strain Al Hakam) protein is tRNA-specific 2-thiouridylase MnmA.